The sequence spans 463 residues: RuvB-like 2 (463 aa).

77–84 lines the ATP pocket; sequence GQPGTGKT.

Belongs to the RuvB family. In terms of assembly, forms homohexameric rings. Can form a dodecamer with ruvbl1 made of two stacked hexameric rings. Component of the chromatin-remodeling Ino80 complex. Component of some MLL1/MLL complex.

It is found in the nucleus. The protein localises to the dynein axonemal particle. It carries out the reaction ATP + H2O = ADP + phosphate + H(+). Its function is as follows. Has double-stranded DNA-stimulated ATPase activity. Has ATP-dependent DNA helicase (5' to 3') activity suggesting a role in nuclear processes such as recombination and transcription. Represses gene activation mediated by beta-catenin. Proposed core component of the chromatin remodeling Ino80 complex which exhibits DNA- and nucleosome-activated ATPase activity and catalyzes ATP-dependent nucleosome sliding. Involved in the endoplasmic reticulum (ER)-associated degradation (ERAD) pathway where it negatively regulates expression of ER stress response genes. May act as a regulator of embryonic heart growth. The sequence is that of RuvB-like 2 (ruvbl2) from Danio rerio (Zebrafish).